We begin with the raw amino-acid sequence, 265 residues long: tRNA (guanine-N(1)-)-methyltransferase (265 aa).

S-adenosyl-L-methionine is bound by residues Gly-119 and 139-144 (IGDYVL).

This sequence belongs to the RNA methyltransferase TrmD family. Homodimer.

The protein localises to the cytoplasm. It catalyses the reaction guanosine(37) in tRNA + S-adenosyl-L-methionine = N(1)-methylguanosine(37) in tRNA + S-adenosyl-L-homocysteine + H(+). Its function is as follows. Specifically methylates guanosine-37 in various tRNAs. The polypeptide is tRNA (guanine-N(1)-)-methyltransferase (Alcanivorax borkumensis (strain ATCC 700651 / DSM 11573 / NCIMB 13689 / SK2)).